The following is a 410-amino-acid chain: Toluene 1,2-dioxygenase system ferredoxin--NAD(+) reductase component (410 aa).

Position 4–35 (4–35) interacts with FAD; the sequence is HVAIIGNGVGGFTTAQALRAEGFEGRISLIGD. 145 to 173 is an NAD(+) binding site; the sequence is RLLIVGGGLIGCEVATTARKLGLSVTILE.

This sequence belongs to the bacterial ring-hydroxylating dioxygenase ferredoxin reductase family. In terms of assembly, this dioxygenase system consists of four proteins: the two subunits of the hydroxylase component (todC1 and todC2), a ferredoxin (TodB) and a ferredoxin reductase (TodA). Requires FAD as cofactor.

The enzyme catalyses 2 reduced [2Fe-2S]-[ferredoxin] + NAD(+) + H(+) = 2 oxidized [2Fe-2S]-[ferredoxin] + NADH. Its pathway is xenobiotic degradation; toluene degradation. In terms of biological role, part of the electron transfer component of toluene 1,2-dioxygenase, transfers electrons from ferredoxin (TodB) to NADH. The sequence is that of Toluene 1,2-dioxygenase system ferredoxin--NAD(+) reductase component (todA) from Pseudomonas putida (strain ATCC 700007 / DSM 6899 / JCM 31910 / BCRC 17059 / LMG 24140 / F1).